The primary structure comprises 340 residues: Protein SSUH2 homolog (340 aa).

Over residues 1–11 (MDRDPSEEDSM) the composition is skewed to acidic residues. The disordered stretch occupies residues 1-20 (MDRDPSEEDSMADLSFEAES).

In terms of tissue distribution, widely expressed, with highest levels in the liver, intestine, tongue and underjaw.

The protein resides in the cytoplasm. Its subcellular location is the nucleus. Functionally, plays a role in odontogenesis. The sequence is that of Protein SSUH2 homolog from Mus musculus (Mouse).